The primary structure comprises 355 residues: Alanine racemase (355 aa).

The active-site Proton acceptor; specific for D-alanine is the lysine 34. Residue lysine 34 is modified to N6-(pyridoxal phosphate)lysine. Arginine 133 is a substrate binding site. The active-site Proton acceptor; specific for L-alanine is the tyrosine 249. Residue methionine 297 coordinates substrate.

The protein belongs to the alanine racemase family. The cofactor is pyridoxal 5'-phosphate.

The enzyme catalyses L-alanine = D-alanine. It functions in the pathway amino-acid biosynthesis; D-alanine biosynthesis; D-alanine from L-alanine: step 1/1. Catalyzes the interconversion of L-alanine and D-alanine. May also act on other amino acids. This chain is Alanine racemase (alr), found in Rickettsia africae (strain ESF-5).